The sequence spans 314 residues: Methionyl-tRNA formyltransferase (314 aa).

113–116 (SLLP) contributes to the (6S)-5,6,7,8-tetrahydrofolate binding site.

Belongs to the Fmt family.

The enzyme catalyses L-methionyl-tRNA(fMet) + (6R)-10-formyltetrahydrofolate = N-formyl-L-methionyl-tRNA(fMet) + (6S)-5,6,7,8-tetrahydrofolate + H(+). Functionally, attaches a formyl group to the free amino group of methionyl-tRNA(fMet). The formyl group appears to play a dual role in the initiator identity of N-formylmethionyl-tRNA by promoting its recognition by IF2 and preventing the misappropriation of this tRNA by the elongation apparatus. The protein is Methionyl-tRNA formyltransferase of Pseudomonas aeruginosa (strain UCBPP-PA14).